Consider the following 233-residue polypeptide: Large ribosomal subunit protein uL1 (233 aa).

Belongs to the universal ribosomal protein uL1 family. As to quaternary structure, part of the 50S ribosomal subunit.

Binds directly to 23S rRNA. The L1 stalk is quite mobile in the ribosome, and is involved in E site tRNA release. Its function is as follows. Protein L1 is also a translational repressor protein, it controls the translation of the L11 operon by binding to its mRNA. This is Large ribosomal subunit protein uL1 from Vibrio cholerae serotype O1 (strain ATCC 39315 / El Tor Inaba N16961).